The following is a 253-amino-acid chain: Triosephosphate isomerase (253 aa).

9-11 (NWK) is a binding site for substrate. Residue H97 is the Electrophile of the active site. E169 serves as the catalytic Proton acceptor. Residues G175, S215, and 236-237 (GG) contribute to the substrate site.

Belongs to the triosephosphate isomerase family. In terms of assembly, homodimer.

Its subcellular location is the cytoplasm. The enzyme catalyses D-glyceraldehyde 3-phosphate = dihydroxyacetone phosphate. It participates in carbohydrate biosynthesis; gluconeogenesis. It functions in the pathway carbohydrate degradation; glycolysis; D-glyceraldehyde 3-phosphate from glycerone phosphate: step 1/1. Involved in the gluconeogenesis. Catalyzes stereospecifically the conversion of dihydroxyacetone phosphate (DHAP) to D-glyceraldehyde-3-phosphate (G3P). This chain is Triosephosphate isomerase, found in Staphylococcus haemolyticus (strain JCSC1435).